A 95-amino-acid polypeptide reads, in one-letter code: Large ribosomal subunit protein eL42 (95 aa).

Residues Cys11, Cys14, Cys71, and Cys74 each contribute to the Zn(2+) site. A C4-type zinc finger spans residues 11 to 74 (CPRCNTHTEH…QVLVITCTVC (64 aa)).

This sequence belongs to the eukaryotic ribosomal protein eL42 family. In terms of assembly, part of the 50S ribosomal subunit. Requires Zn(2+) as cofactor.

In terms of biological role, binds to the 23S rRNA. This is Large ribosomal subunit protein eL42 from Aeropyrum pernix (strain ATCC 700893 / DSM 11879 / JCM 9820 / NBRC 100138 / K1).